We begin with the raw amino-acid sequence, 378 residues long: IDS-type sesquiterpene synthase (378 aa).

Residues aspartate 120 and aspartate 124 each coordinate Mg(2+). Residues 120 to 124 (DDYVD) carry the DDXXD motif motif.

It belongs to the terpene synthase family. The cofactor is Mg(2+). In terms of tissue distribution, highly expressed in male epidermal tissue associated with the cuticle of ventral sternites.

It carries out the reaction (2Z,6E)-farnesyl diphosphate = (Z)-alpha-bisabolene + diphosphate. The protein operates within pheromone biosynthesis. In terms of biological role, sesquiterpene alcohol synthase that catalyzes the formation of the pheromone precursor (Z)-alpha-bisabolene from (2Z,6E)-farnesyl diphosphate. The polypeptide is IDS-type sesquiterpene synthase (Nezara viridula (Southern green stink bug)).